Reading from the N-terminus, the 169-residue chain is S-ribosylhomocysteine lyase (169 aa).

The Fe cation site is built by H54, H58, and C129.

This sequence belongs to the LuxS family. In terms of assembly, homodimer. It depends on Fe cation as a cofactor.

It catalyses the reaction S-(5-deoxy-D-ribos-5-yl)-L-homocysteine = (S)-4,5-dihydroxypentane-2,3-dione + L-homocysteine. Involved in the synthesis of autoinducer 2 (AI-2) which is secreted by bacteria and is used to communicate both the cell density and the metabolic potential of the environment. The regulation of gene expression in response to changes in cell density is called quorum sensing. Catalyzes the transformation of S-ribosylhomocysteine (RHC) to homocysteine (HC) and 4,5-dihydroxy-2,3-pentadione (DPD). The sequence is that of S-ribosylhomocysteine lyase from Actinobacillus pleuropneumoniae serotype 5b (strain L20).